We begin with the raw amino-acid sequence, 306 residues long: Recombination-associated protein RdgC (306 aa).

It belongs to the RdgC family.

Its subcellular location is the cytoplasm. The protein localises to the nucleoid. Functionally, may be involved in recombination. This chain is Recombination-associated protein RdgC, found in Pseudomonas aeruginosa (strain LESB58).